The sequence spans 74 residues: UPF0435 protein ABC2298 (74 aa).

It belongs to the UPF0435 family.

The chain is UPF0435 protein ABC2298 from Shouchella clausii (strain KSM-K16) (Alkalihalobacillus clausii).